The primary structure comprises 542 residues: Polysialoglycoprotein (542 aa).

The first 21 residues, 1-21 (MIMGGVRELLLVVMTVGVVKV), serve as a signal peptide directing secretion. A propeptide spanning residues 22 to 120 (SCYPVGKSQK…TSEAATGPSG (99 aa)) is cleaved from the precursor. Residues 70 to 542 (EEYLETNEVE…GPSGDDAMDI (473 aa)) are disordered. Polar residues predominate over residues 78–95 (VESQASPNHGSSPANDAL). A compositionally biased stretch (basic and acidic residues) spans 97–106 (SEEKLRRVSS). A compositionally biased stretch (low complexity) spans 107-116 (DDAATSEAAT). Tandem repeats lie at residues 121-133 (DDATSEAATGPSG), 134-146 (DDATSEAATGPSG), 147-159 (DDATSEAATGPSG), 160-172 (DDATSEAATGPSG), 173-185 (DDATSEAATGPSG), 186-198 (DDATSEAATGPSG), 199-211 (DDATSEAATGPSG), 212-224 (DDATSEAATGPSG), 225-237 (DDATSEAATGPSG), 238-250 (DDATSEAATGPSG), 251-263 (DDATSEAATGPSG), 264-276 (DDATSEAATGPSG), 277-289 (DDATSEAATGPSG), 290-302 (DDATSEAATGPSG), 303-315 (DDATSEAATGPSG), 316-328 (DDATSEAATGPSG), 329-341 (DDATSEAATGPSG), 342-354 (DDATSEAATGPSG), 355-367 (DDATSEAATGPSG), 368-380 (DDATSEAATGPSG), 381-393 (DDATSEAATGPSG), 394-406 (DDATSEAATGPSG), 407-419 (DDATSEAATGPSG), 420-432 (DDATSEAATGPSG), 433-445 (DDATSEAATGPSG), 446-458 (DDATSEAATGPSG), 459-471 (DDATSEAATGPSG), 472-484 (DDATSEAATGPSG), 485-497 (DDATSEAATGPSG), 498-510 (DDATSEAATGPSG), 511-523 (DDATSEAATGPSG), and 524-536 (DDATSEAATGPSG). Residues 121 to 536 (DDATSEAATG…TSEAATGPSG (416 aa)) form a 32 X 13 AA tandem repeats of D-D-A-T-S-E-A-A-T-G-P-S-G region. Thr124 carries O-linked (GalNAc...) threonine glycosylation. Residue Ser125 is glycosylated (O-linked (GalNAc...) serine). Residues Thr129 and Thr137 are each glycosylated (O-linked (GalNAc...) threonine). A glycan (O-linked (GalNAc...) serine) is linked at Ser138. O-linked (GalNAc...) threonine glycosylation is found at Thr142 and Thr150. O-linked (GalNAc...) serine glycosylation occurs at Ser151. Thr155 and Thr163 each carry an O-linked (GalNAc...) threonine glycan. The O-linked (GalNAc...) serine glycan is linked to Ser164. Residues Thr168 and Thr176 are each glycosylated (O-linked (GalNAc...) threonine). The O-linked (GalNAc...) serine glycan is linked to Ser177. O-linked (GalNAc...) threonine glycans are attached at residues Thr181 and Thr189. O-linked (GalNAc...) serine glycosylation is present at Ser190. Thr194 and Thr202 each carry an O-linked (GalNAc...) threonine glycan. Ser203 is a glycosylation site (O-linked (GalNAc...) serine). O-linked (GalNAc...) threonine glycans are attached at residues Thr207 and Thr215. The O-linked (GalNAc...) serine glycan is linked to Ser216. Residues Thr220 and Thr228 are each glycosylated (O-linked (GalNAc...) threonine). Ser229 is a glycosylation site (O-linked (GalNAc...) serine). 2 O-linked (GalNAc...) threonine glycosylation sites follow: Thr233 and Thr241. Ser242 carries O-linked (GalNAc...) serine glycosylation. O-linked (GalNAc...) threonine glycosylation is found at Thr246 and Thr254. An O-linked (GalNAc...) serine glycan is attached at Ser255. Residues Thr259 and Thr267 are each glycosylated (O-linked (GalNAc...) threonine). The O-linked (GalNAc...) serine glycan is linked to Ser268. O-linked (GalNAc...) threonine glycans are attached at residues Thr272 and Thr280. Ser281 carries an O-linked (GalNAc...) serine glycan. O-linked (GalNAc...) threonine glycosylation is found at Thr285 and Thr293. An O-linked (GalNAc...) serine glycan is attached at Ser294. O-linked (GalNAc...) threonine glycans are attached at residues Thr298 and Thr306. O-linked (GalNAc...) serine glycosylation is present at Ser307. O-linked (GalNAc...) threonine glycosylation is found at Thr311 and Thr319. O-linked (GalNAc...) serine glycosylation occurs at Ser320. O-linked (GalNAc...) threonine glycosylation is found at Thr324 and Thr332. An O-linked (GalNAc...) serine glycan is attached at Ser333. 2 O-linked (GalNAc...) threonine glycosylation sites follow: Thr337 and Thr345. A glycan (O-linked (GalNAc...) serine) is linked at Ser346. O-linked (GalNAc...) threonine glycosylation is found at Thr350 and Thr358. Residue Ser359 is glycosylated (O-linked (GalNAc...) serine). Residues Thr363 and Thr371 are each glycosylated (O-linked (GalNAc...) threonine). An O-linked (GalNAc...) serine glycan is attached at Ser372. Residues Thr376 and Thr384 are each glycosylated (O-linked (GalNAc...) threonine). O-linked (GalNAc...) serine glycosylation is present at Ser385. O-linked (GalNAc...) threonine glycans are attached at residues Thr389 and Thr397. Residue Ser398 is glycosylated (O-linked (GalNAc...) serine). Thr402 and Thr410 each carry an O-linked (GalNAc...) threonine glycan. O-linked (GalNAc...) serine glycosylation is present at Ser411. Thr415 and Thr423 each carry an O-linked (GalNAc...) threonine glycan. The O-linked (GalNAc...) serine glycan is linked to Ser424. O-linked (GalNAc...) threonine glycosylation is found at Thr428 and Thr436. A glycan (O-linked (GalNAc...) serine) is linked at Ser437. O-linked (GalNAc...) threonine glycosylation is found at Thr441 and Thr449. The O-linked (GalNAc...) serine glycan is linked to Ser450. O-linked (GalNAc...) threonine glycans are attached at residues Thr454 and Thr462. The O-linked (GalNAc...) serine glycan is linked to Ser463. O-linked (GalNAc...) threonine glycans are attached at residues Thr467 and Thr475. A glycan (O-linked (GalNAc...) serine) is linked at Ser476. Residues Thr480 and Thr488 are each glycosylated (O-linked (GalNAc...) threonine). A glycan (O-linked (GalNAc...) serine) is linked at Ser489. Residues Thr493 and Thr501 are each glycosylated (O-linked (GalNAc...) threonine). O-linked (GalNAc...) serine glycosylation is present at Ser502. O-linked (GalNAc...) threonine glycans are attached at residues Thr506 and Thr514. O-linked (GalNAc...) serine glycosylation occurs at Ser515. 2 O-linked (GalNAc...) threonine glycosylation sites follow: Thr519 and Thr527. An O-linked (GalNAc...) serine glycan is attached at Ser528. O-linked (GalNAc...) threonine glycosylation is present at Thr532. Positions 537–542 (DDAMDI) are excised as a propeptide.

In terms of processing, most sialic acid residues exist in the form of polysialyl groups partly capped with deaminoneuraminic acid. Cortical alveoli of immature ovaries.

In response to egg activation, PSGP is discharged by exocytosis into the perivitelline space, where it undergoes rapid proteolysis into glycotridecapeptides. During fertilization and/or early development the glycotridecapeptides prevent polyspermy or are involved in the formation of a fertilization membrane. In Oncorhynchus mykiss (Rainbow trout), this protein is Polysialoglycoprotein.